The primary structure comprises 417 residues: Tyrosine--tRNA ligase (417 aa).

Tyrosine 39 contacts L-tyrosine. The short motif at 44 to 53 (PTASSLHAGS) is the 'HIGH' region element. L-tyrosine-binding residues include tyrosine 176 and glutamine 180. Residues 236–240 (KMGKS) carry the 'KMSKS' region motif. Lysine 239 is an ATP binding site. The S4 RNA-binding domain occupies 350–417 (TGLLILLVQA…KKKHVLIKPL (68 aa)).

Belongs to the class-I aminoacyl-tRNA synthetase family. TyrS type 1 subfamily. Homodimer.

It is found in the cytoplasm. The catalysed reaction is tRNA(Tyr) + L-tyrosine + ATP = L-tyrosyl-tRNA(Tyr) + AMP + diphosphate + H(+). Catalyzes the attachment of tyrosine to tRNA(Tyr) in a two-step reaction: tyrosine is first activated by ATP to form Tyr-AMP and then transferred to the acceptor end of tRNA(Tyr). This is Tyrosine--tRNA ligase from Bartonella henselae (strain ATCC 49882 / DSM 28221 / CCUG 30454 / Houston 1) (Rochalimaea henselae).